The sequence spans 151 residues: MSSLPRRIIKETQRLMQEPVPGINAIPDENNARYFHVIVTGPNDSPFEGGVFKLELFLPEDYPMSAPKVRFITKIYHPNIDRLGRICLDVLKDKWSPALQIRTILLSIQALLSAPNPDDPLANDVAELWKVNEAEAIRNAREWTQKYAVED.

The 147-residue stretch at 3–149 (SLPRRIIKET…AREWTQKYAV (147 aa)) folds into the UBC core domain. Residue Cys87 is the Glycyl thioester intermediate of the active site.

The protein belongs to the ubiquitin-conjugating enzyme family.

The catalysed reaction is S-ubiquitinyl-[E1 ubiquitin-activating enzyme]-L-cysteine + [E2 ubiquitin-conjugating enzyme]-L-cysteine = [E1 ubiquitin-activating enzyme]-L-cysteine + S-ubiquitinyl-[E2 ubiquitin-conjugating enzyme]-L-cysteine.. The protein operates within protein modification; protein ubiquitination. Catalyzes the covalent attachment of ubiquitin to other proteins. This Drosophila melanogaster (Fruit fly) protein is Ubiquitin-conjugating enzyme E2 N (ben).